Here is a 365-residue protein sequence, read N- to C-terminus: Serpentine receptor class epsilon-21 (365 aa).

The next 7 membrane-spanning stretches (helical) occupy residues 49-69 (ILINFLFLLSIFVTFIGVFCI), 82-102 (IIISGMLLWLELVVSRSFVFI), 116-136 (LLFWAALLRYHYMFFGVHTLL), 158-178 (VWIAAILIGANFLISLTYAFL), 189-209 (IFIVCLAVAVVSIILLEIIYF), 250-270 (VVVVGAFIIMLILAECLPIIL), and 292-314 (PLVVVPTVVALMESFRKVFLSYY).

Belongs to the nematode receptor-like protein sre family.

It is found in the membrane. This Caenorhabditis elegans protein is Serpentine receptor class epsilon-21 (sre-21).